The sequence spans 513 residues: Glutamate--tRNA ligase 2 (513 aa).

The short motif at 11–21 is the 'HIGH' region element; sequence PSPSGFLHIGS. A 'KMSKS' region motif is present at residues 240–244; sequence KLSKR. Lys243 lines the ATP pocket.

The protein belongs to the class-I aminoacyl-tRNA synthetase family. Glutamate--tRNA ligase type 1 subfamily. As to quaternary structure, monomer.

It localises to the cytoplasm. The catalysed reaction is tRNA(Glu) + L-glutamate + ATP = L-glutamyl-tRNA(Glu) + AMP + diphosphate. Functionally, catalyzes the attachment of glutamate to tRNA(Glu) in a two-step reaction: glutamate is first activated by ATP to form Glu-AMP and then transferred to the acceptor end of tRNA(Glu). This is Glutamate--tRNA ligase 2 from Rickettsia massiliae (strain Mtu5).